The sequence spans 280 residues: Suppressor of disruption of TFIIS (280 aa).

This sequence belongs to the SSM1 family.

Could be an enzyme that inactivates 6-azauracil by modifying it. In Saccharomyces cerevisiae (strain ATCC 204508 / S288c) (Baker's yeast), this protein is Suppressor of disruption of TFIIS (SDT1).